The sequence spans 453 residues: Allantoinase (453 aa).

Zn(2+) is bound by residues H59, H61, K146, H186, H242, and D315. K146 bears the N6-carboxylysine mark.

This sequence belongs to the metallo-dependent hydrolases superfamily. Allantoinase family. In terms of assembly, homotetramer. It depends on Zn(2+) as a cofactor. In terms of processing, carboxylation allows a single lysine to coordinate two zinc ions.

The catalysed reaction is (S)-allantoin + H2O = allantoate + H(+). Its pathway is nitrogen metabolism; (S)-allantoin degradation; allantoate from (S)-allantoin: step 1/1. Functionally, catalyzes the conversion of allantoin (5-ureidohydantoin) to allantoic acid by hydrolytic cleavage of the five-member hydantoin ring. This Escherichia coli (strain SMS-3-5 / SECEC) protein is Allantoinase.